Reading from the N-terminus, the 164-residue chain is MADQTKIATLDSTLIDRLPTSSKTLFEAKATKALTFESIANELGRSEVAVAALFYGQSQASAADIEKLSQILDVPQSKLEAELGGFPDRGRAGPMPPVEPLIYRLYEIVQNYGYAYKAVMNEKFGDGIMSAISFSTKVEKETDEQGNNWAVITLRGKWLPFSRF.

Catalysis depends on residues Arg104, Glu107, and Ser130.

The protein belongs to the cyanase family.

It catalyses the reaction cyanate + hydrogencarbonate + 3 H(+) = NH4(+) + 2 CO2. Its function is as follows. Catalyzes the reaction of cyanate with bicarbonate to produce ammonia and carbon dioxide. The protein is Cyanate hydratase of Botryotinia fuckeliana (strain B05.10) (Noble rot fungus).